A 377-amino-acid chain; its full sequence is MSRQESSNKFFIKKILREYYSRKPLEEPLYIHKREIAIHSLEDEAYIRHLSFPSITHLYNFILNEKTPLHLYYSSAYYESPSVNKMELKGWIGSDLMFDLDSDHYPGCDKILSICIEENTIYDGKIKTCPKTESKPVIHPLIKTECIQKAYRDALRIKYILEDELGLKNIKIYFSGNRGFHVKVIDEKIWDLESDERREIASYISLENFDINKLFPVIGKRKKYVIITRNEHGIRKRVLDYVIKNNIVNGNELFIKLPLKLLEETINDLTIPIDIVVTMDISRLSRFGNSINGKSGLITKLIEPLDNYEFDINDFCPWSGNIVVKPLIDISGLQVFDEKIDLKRGVKKILDSKIAVYLTLKGIVKIISDEKLVIKNV.

Residues Asp99, Asp101, and Asp274 contribute to the active site.

This sequence belongs to the eukaryotic-type primase small subunit family. As to quaternary structure, heterodimer of a small subunit (PriS) and a large subunit (PriL). It depends on Mg(2+) as a cofactor. Mn(2+) is required as a cofactor.

Functionally, catalytic subunit of DNA primase, an RNA polymerase that catalyzes the synthesis of short RNA molecules used as primers for DNA polymerase during DNA replication. The small subunit contains the primase catalytic core and has DNA synthesis activity on its own. Binding to the large subunit stabilizes and modulates the activity, increasing the rate of DNA synthesis while decreasing the length of the DNA fragments, and conferring RNA synthesis capability. The DNA polymerase activity may enable DNA primase to also catalyze primer extension after primer synthesis. May also play a role in DNA repair. This is DNA primase small subunit PriS from Staphylothermus marinus (strain ATCC 43588 / DSM 3639 / JCM 9404 / F1).